Consider the following 216-residue polypeptide: Trimethylamine corrinoid protein 1 (216 aa).

A B12-binding N-terminal domain is found at 1 to 92 (MANKEEIIAK…EMEKRKSQTK (92 aa)). The B12-binding domain maps to 94–216 (LGTIVIGTIE…VVSKVKAALL (123 aa)). Residue histidine 107 coordinates methylcob(III)alamin.

It belongs to the methylamine corrinoid protein family. In terms of assembly, can form a complex with MttB.

It functions in the pathway one-carbon metabolism; methanogenesis from trimethylamine. In terms of biological role, acts probably as a methyl group carrier between MttB and either MtbA or MtaA. The protein is Trimethylamine corrinoid protein 1 (mttC1) of Methanosarcina mazei (strain ATCC BAA-159 / DSM 3647 / Goe1 / Go1 / JCM 11833 / OCM 88) (Methanosarcina frisia).